A 193-amino-acid polypeptide reads, in one-letter code: MRNPVSMIVGLGNPGTEYANTRHNAGQDFVENLARALGQPLVNTPKHFGFTTRISLAGKDVRLLVPTTFMNRSGQAVASLANFFKIAPDNILVVHDELDLPPGTAKLKIGGGHGGHNGLRDIIAALGNNKEFGRLRIGIGHPGNAKQVASYVLKKAPADEYRLIEDAQTAAERTLTDLVAGDWEKAMRELHTA.

Tyr-18 lines the tRNA pocket. His-23 acts as the Proton acceptor in catalysis. TRNA is bound by residues Phe-69, Asn-71, and Asn-117.

Belongs to the PTH family. As to quaternary structure, monomer.

It localises to the cytoplasm. The enzyme catalyses an N-acyl-L-alpha-aminoacyl-tRNA + H2O = an N-acyl-L-amino acid + a tRNA + H(+). Its function is as follows. Hydrolyzes ribosome-free peptidyl-tRNAs (with 1 or more amino acids incorporated), which drop off the ribosome during protein synthesis, or as a result of ribosome stalling. Functionally, catalyzes the release of premature peptidyl moieties from peptidyl-tRNA molecules trapped in stalled 50S ribosomal subunits, and thus maintains levels of free tRNAs and 50S ribosomes. In Teredinibacter turnerae (strain ATCC 39867 / T7901), this protein is Peptidyl-tRNA hydrolase.